The primary structure comprises 301 residues: NADH-cytochrome b5 reductase 3 (301 aa).

The N-myristoyl glycine moiety is linked to residue Gly2. Residues 40–152 (DIKYPLRLID…RGPNGLLVYQ (113 aa)) form the FAD-binding FR-type domain. Residue Lys42 is modified to N6-acetyllysine. Phosphotyrosine is present on Tyr43. Residue Lys50 is modified to N6-acetyllysine. FAD is bound by residues Arg92, Pro93, Tyr94, Val109, Lys111, and Phe114. At Lys120 the chain carries N6-acetyllysine. FAD contacts are provided by Lys126, Met127, Ser128, and Thr185.

Belongs to the flavoprotein pyridine nucleotide cytochrome reductase family. As to quaternary structure, component of a complex composed of cytochrome b5, NADH-cytochrome b5 reductase (CYB5R3) and MTARC2. Interacts with MTLN; the interaction is required to maintain cellular lipid composition and leads to stimulation of mitochondrial respiratory complex I activity. Requires FAD as cofactor.

The protein localises to the endoplasmic reticulum membrane. The protein resides in the mitochondrion outer membrane. The enzyme catalyses 2 Fe(III)-[cytochrome b5] + NADH = 2 Fe(II)-[cytochrome b5] + NAD(+) + H(+). Its function is as follows. Catalyzes the reduction of two molecules of cytochrome b5 using NADH as the electron donor. The chain is NADH-cytochrome b5 reductase 3 from Mus musculus (Mouse).